Here is a 113-residue protein sequence, read N- to C-terminus: UPF0102 protein CHU_0465 (113 aa).

This sequence belongs to the UPF0102 family.

The protein is UPF0102 protein CHU_0465 of Cytophaga hutchinsonii (strain ATCC 33406 / DSM 1761 / CIP 103989 / NBRC 15051 / NCIMB 9469 / D465).